The sequence spans 251 residues: Aliphatic sulfonates import ATP-binding protein SsuB (251 aa).

An ABC transporter domain is found at 3-231 (VSINEVSKYF…PRSKNSESFQ (229 aa)). An ATP-binding site is contributed by 39 to 46 (GPSGCGKS).

Belongs to the ABC transporter superfamily. Aliphatic sulfonates importer (TC 3.A.1.17.2) family. The complex is composed of two ATP-binding proteins (SsuB), two transmembrane proteins (SsuC) and a solute-binding protein (SsuA).

It is found in the cell membrane. The enzyme catalyses ATP + H2O + aliphatic sulfonate-[sulfonate-binding protein]Side 1 = ADP + phosphate + aliphatic sulfonateSide 2 + [sulfonate-binding protein]Side 1.. Functionally, part of the ABC transporter complex SsuABC involved in aliphatic sulfonates import. Responsible for energy coupling to the transport system. This chain is Aliphatic sulfonates import ATP-binding protein SsuB, found in Bacillus cereus (strain ZK / E33L).